A 195-amino-acid polypeptide reads, in one-letter code: Elongation factor P (195 aa).

The protein belongs to the elongation factor P family.

The protein localises to the cytoplasm. The protein operates within protein biosynthesis; polypeptide chain elongation. Involved in peptide bond synthesis. Stimulates efficient translation and peptide-bond synthesis on native or reconstituted 70S ribosomes in vitro. Probably functions indirectly by altering the affinity of the ribosome for aminoacyl-tRNA, thus increasing their reactivity as acceptors for peptidyl transferase. The chain is Elongation factor P from Rhodopirellula baltica (strain DSM 10527 / NCIMB 13988 / SH1).